A 631-amino-acid chain; its full sequence is Quinoprotein alcohol dehydrogenase PedE (631 aa).

The first 33 residues, 1 to 33, serve as a signal peptide directing secretion; it reads MTIRSLPALSPLALSVRVLLMAGSLALGNVATA. Ca(2+) contacts are provided by Asp53, Thr56, and Asp59. Glu103 contributes to the pyrroloquinoline quinone binding site. Cys147 and Cys148 are joined by a disulfide. Pyrroloquinoline quinone contacts are provided by residues Arg153, Thr197, and 215-217; that span reads HGS. Glu221 lines the Ca(2+) pocket. The segment at 250–286 is disordered; that stretch reads GRLNGKDSTPTGDVKAPSWPDDPTTETGKVEAWSHGG. The Ca(2+) site is built by Asn308 and Asp358. Asp358 functions as the Proton acceptor in the catalytic mechanism. Residue Arg386 coordinates pyrroloquinoline quinone. The disordered stretch occupies residues 421–443; sequence GRPVENPGQRPAKPLPGETKGKP. The pyrroloquinoline quinone site is built by Trp531 and Ala595.

The protein belongs to the bacterial PQQ dehydrogenase family. As to quaternary structure, homodimer. Interacts with cytochrome c550. Pyrroloquinoline quinone serves as cofactor. It depends on Ca(2+) as a cofactor. Post-translationally, the disulfide ring formed between the two adjacent cysteine residues Cys-147 and Cys-148 is essential for efficient electron transfer at pH 7 from PedE to its natural electron acceptor cytochrome c550.

It localises to the periplasm. It catalyses the reaction a primary alcohol + 2 Fe(III)-[cytochrome c] = an aldehyde + 2 Fe(II)-[cytochrome c] + 2 H(+). It carries out the reaction ethanol + 2 Fe(III)-[cytochrome c] = acetaldehyde + 2 Fe(II)-[cytochrome c] + 2 H(+). The enzyme catalyses butan-1-ol + 2 Fe(III)-[cytochrome c] = butanal + 2 Fe(II)-[cytochrome c] + 2 H(+). The catalysed reaction is butan-2-ol + 2 Fe(III)-[cytochrome c] = butan-2-one + 2 Fe(II)-[cytochrome c] + 2 H(+). It catalyses the reaction 2-phenylethanol + 2 Fe(III)-[cytochrome c] = 2-phenylacetaldehyde + 2 Fe(II)-[cytochrome c] + 2 H(+). It carries out the reaction octan-1-ol + 2 Fe(III)-[cytochrome c] = octanal + 2 Fe(II)-[cytochrome c] + 2 H(+). The enzyme catalyses hexan-1-ol + 2 Fe(III)-[cytochrome c] = hexanal + 2 Fe(II)-[cytochrome c] + 2 H(+). The catalysed reaction is cinnamyl alcohol + 2 Fe(III)-[cytochrome c] = cinnamaldehyde + 2 Fe(II)-[cytochrome c] + 2 H(+). It catalyses the reaction farnesol + 2 Fe(III)-[cytochrome c] = farnesal + 2 Fe(II)-[cytochrome c] + 2 H(+). It carries out the reaction an aldehyde + 2 Fe(III)-[cytochrome c] + H2O = a carboxylate + 2 Fe(II)-[cytochrome c] + 3 H(+). The enzyme catalyses acetaldehyde + 2 Fe(III)-[cytochrome c] + H2O = 2 Fe(II)-[cytochrome c] + acetate + 3 H(+). The catalysed reaction is butanal + 2 Fe(III)-[cytochrome c] + H2O = butanoate + 2 Fe(II)-[cytochrome c] + 3 H(+). It catalyses the reaction hexanal + 2 Fe(III)-[cytochrome c] + H2O = hexanoate + 2 Fe(II)-[cytochrome c] + 3 H(+). It carries out the reaction octanal + 2 Fe(III)-[cytochrome c] + H2O = octanoate + 2 Fe(II)-[cytochrome c] + 3 H(+). In terms of biological role, alcohol dehydrogenase that catalyzes the oxidation of a range of substrates, including linear and aromatic primary and secondary alcohols, as well as aldehydes, allowing bacterial growth with a variety of volatile organic compounds (VOCs) as carbon and energy sources. Uses a specific inducible cytochrome c550, encoded by the adjacent gene in the locus, as electron acceptor. The chain is Quinoprotein alcohol dehydrogenase PedE from Pseudomonas putida (strain ATCC 47054 / DSM 6125 / CFBP 8728 / NCIMB 11950 / KT2440).